Here is a 603-residue protein sequence, read N- to C-terminus: Threonine--tRNA ligase (603 aa).

A catalytic region spans residues 209–500; that stretch reads DHRKLGNEMK…LIEHCAGELP (292 aa). Cys-301, His-352, and His-477 together coordinate Zn(2+).

This sequence belongs to the class-II aminoacyl-tRNA synthetase family. In terms of assembly, homodimer. Zn(2+) serves as cofactor.

It localises to the cytoplasm. The enzyme catalyses tRNA(Thr) + L-threonine + ATP = L-threonyl-tRNA(Thr) + AMP + diphosphate + H(+). Its function is as follows. Catalyzes the attachment of threonine to tRNA(Thr) in a two-step reaction: L-threonine is first activated by ATP to form Thr-AMP and then transferred to the acceptor end of tRNA(Thr). Also edits incorrectly charged L-seryl-tRNA(Thr). The sequence is that of Threonine--tRNA ligase from Campylobacter lari (strain RM2100 / D67 / ATCC BAA-1060).